A 123-amino-acid polypeptide reads, in one-letter code: Large ribosomal subunit protein bL19 (123 aa).

The protein belongs to the bacterial ribosomal protein bL19 family.

Its function is as follows. This protein is located at the 30S-50S ribosomal subunit interface and may play a role in the structure and function of the aminoacyl-tRNA binding site. The chain is Large ribosomal subunit protein bL19 from Acinetobacter baylyi (strain ATCC 33305 / BD413 / ADP1).